The primary structure comprises 737 residues: Zinc finger protein 280C (737 aa).

Residues lysine 5, lysine 10, lysine 14, lysine 33, and lysine 55 each participate in a glycyl lysine isopeptide (Lys-Gly) (interchain with G-Cter in SUMO2) cross-link. Positions 57-66 (AISNILNRGH) are enriched in polar residues. Positions 57–137 (AISNILNRGH…DFTKNSQVGS (81 aa)) are disordered. A Glycyl lysine isopeptide (Lys-Gly) (interchain with G-Cter in SUMO2) cross-link involves residue lysine 75. Serine 80 bears the Phosphoserine mark. A compositionally biased stretch (polar residues) spans 112–123 (SKSSQSSVTVEN). Glycyl lysine isopeptide (Lys-Gly) (interchain with G-Cter in SUMO2) cross-links involve residues lysine 113, lysine 126, lysine 167, lysine 174, lysine 180, and lysine 187. Over residues 176–185 (PSTSKVNSVT) the composition is skewed to polar residues. A disordered region spans residues 176–223 (PSTSKVNSVTPKKPKTSEDVPQINPSTSLPLIGSPPVTSSQVMLSKGT). A compositionally biased stretch (polar residues) spans 211–223 (PVTSSQVMLSKGT). A Phosphothreonine modification is found at threonine 223. Position 227 is a phosphoserine (serine 227). Lysine 273 participates in a covalent cross-link: Glycyl lysine isopeptide (Lys-Gly) (interchain with G-Cter in SUMO2). 5 consecutive C2H2-type zinc fingers follow at residues 316–338 (FKCF…MKHH), 353–376 (TTCQ…ESTH), 383–406 (TICK…KDTH), 413–436 (YVCQ…RAAH), and 470–492 (HRCP…KAQH). A Glycyl lysine isopeptide (Lys-Gly) (interchain with G-Cter in SUMO2) cross-link involves residue lysine 522. The segment covering 535-579 (SFLQVTPPTSQNTTARNPRKSNASRSKTSKLHATTSTASKVNTSK) has biased composition (polar residues). Residues 535 to 602 (SFLQVTPPTS…YKQKRQRNRK (68 aa)) form a disordered region. Residue threonine 540 is modified to Phosphothreonine. Residues lysine 564 and lysine 574 each participate in a glycyl lysine isopeptide (Lys-Gly) (interchain with G-Cter in SUMO2) cross-link. The span at 580 to 602 (PRGRIAKSKAKPSYKQKRQRNRK) shows a compositional bias: basic residues.

The protein localises to the nucleus. In terms of biological role, may function as a transcription factor. This is Zinc finger protein 280C (ZNF280C) from Homo sapiens (Human).